A 252-amino-acid polypeptide reads, in one-letter code: Imidazole glycerol phosphate synthase subunit HisF (252 aa).

Active-site residues include D13 and D132.

This sequence belongs to the HisA/HisF family. Heterodimer of HisH and HisF.

Its subcellular location is the cytoplasm. The enzyme catalyses 5-[(5-phospho-1-deoxy-D-ribulos-1-ylimino)methylamino]-1-(5-phospho-beta-D-ribosyl)imidazole-4-carboxamide + L-glutamine = D-erythro-1-(imidazol-4-yl)glycerol 3-phosphate + 5-amino-1-(5-phospho-beta-D-ribosyl)imidazole-4-carboxamide + L-glutamate + H(+). It participates in amino-acid biosynthesis; L-histidine biosynthesis; L-histidine from 5-phospho-alpha-D-ribose 1-diphosphate: step 5/9. In terms of biological role, IGPS catalyzes the conversion of PRFAR and glutamine to IGP, AICAR and glutamate. The HisF subunit catalyzes the cyclization activity that produces IGP and AICAR from PRFAR using the ammonia provided by the HisH subunit. The chain is Imidazole glycerol phosphate synthase subunit HisF from Campylobacter curvus (strain 525.92).